Here is a 180-residue protein sequence, read N- to C-terminus: ATP synthase subunit delta 2 (180 aa).

Belongs to the ATPase delta chain family. F-type ATPases have 2 components, F(1) - the catalytic core - and F(0) - the membrane proton channel. F(1) has five subunits: alpha(3), beta(3), gamma(1), delta(1), epsilon(1). F(0) has three main subunits: a(1), b(2) and c(10-14). The alpha and beta chains form an alternating ring which encloses part of the gamma chain. F(1) is attached to F(0) by a central stalk formed by the gamma and epsilon chains, while a peripheral stalk is formed by the delta and b chains.

The protein localises to the cell inner membrane. Functionally, f(1)F(0) ATP synthase produces ATP from ADP in the presence of a proton or sodium gradient. F-type ATPases consist of two structural domains, F(1) containing the extramembraneous catalytic core and F(0) containing the membrane proton channel, linked together by a central stalk and a peripheral stalk. During catalysis, ATP synthesis in the catalytic domain of F(1) is coupled via a rotary mechanism of the central stalk subunits to proton translocation. This protein is part of the stalk that links CF(0) to CF(1). It either transmits conformational changes from CF(0) to CF(1) or is implicated in proton conduction. The protein is ATP synthase subunit delta 2 of Vibrio campbellii (strain ATCC BAA-1116).